We begin with the raw amino-acid sequence, 104 residues long: Pole-localizer protein TmaR (104 aa).

2 coiled-coil regions span residues 13-43 (RKNK…NLLD) and 76-96 (SAEI…LTEE).

The protein belongs to the pole-localizer TmaR family.

It is found in the cytoplasm. Its function is as follows. Pole-localizer protein involved in the regulation of several cellular processes. In Vibrio vulnificus (strain CMCP6), this protein is Pole-localizer protein TmaR.